A 231-amino-acid polypeptide reads, in one-letter code: MSEIKDVIVQGLWKNNSALVQLLGLCPLLAVTSTATNALGLGLATTLVLTLTNLTISTLRHWTPSEIRIPIYVMIIASVVSAVQMLINAYAFGLYQSLGIFIPLIVTNCIVVGRAEAFAAKKGPALSALDGFSIGMGATCAMFVLGSLREIIGNGTLFDGADALLGSWAKVLRVEIFHTDSPFLLAMLPPGAFIGLGLMLAGKYLIDEKMKKRRTEAAAERALPNGETGNV.

The next 6 helical transmembrane spans lie at Ala18–Ala38, Leu39–Leu59, Thr63–Val83, Leu86–Val106, Ala125–Leu145, and Pro182–Gly202.

This sequence belongs to the NqrDE/RnfAE family. As to quaternary structure, the complex is composed of six subunits: RsxA, RsxB, RsxC, RsxD, RsxE and RsxG.

It is found in the cell inner membrane. Part of a membrane-bound complex that couples electron transfer with translocation of ions across the membrane. Required to maintain the reduced state of SoxR. The polypeptide is Ion-translocating oxidoreductase complex subunit E (Escherichia coli O6:K15:H31 (strain 536 / UPEC)).